A 202-amino-acid polypeptide reads, in one-letter code: Probable molybdenum cofactor guanylyltransferase (202 aa).

Residues L13–G15, K25, D71, and D103 each bind GTP. Mg(2+) is bound at residue D103.

This sequence belongs to the MobA family. It depends on Mg(2+) as a cofactor.

It is found in the cytoplasm. The catalysed reaction is Mo-molybdopterin + GTP + H(+) = Mo-molybdopterin guanine dinucleotide + diphosphate. Its function is as follows. Transfers a GMP moiety from GTP to Mo-molybdopterin (Mo-MPT) cofactor (Moco or molybdenum cofactor) to form Mo-molybdopterin guanine dinucleotide (Mo-MGD) cofactor. The sequence is that of Probable molybdenum cofactor guanylyltransferase from Opitutus terrae (strain DSM 11246 / JCM 15787 / PB90-1).